Reading from the N-terminus, the 102-residue chain is MVHGPRTKKHLPPYESPPLTLLLEPVAPVQQTGIQAPQRKPPSQKGHKKGHKKVYSVTVPCNGCDKNLEFCARTSSATILTLQNLLLKDLDFLCSTCETNHG.

The E7 terminal domain stretch occupies residues 2 to 36 (VHGPRTKKHLPPYESPPLTLLLEPVAPVQQTGIQA). A disordered region spans residues 30–52 (QQTGIQAPQRKPPSQKGHKKGHK). A zinc finger lies at 61–97 (CNGCDKNLEFCARTSSATILTLQNLLLKDLDFLCSTC). Positions 79 to 87 (ILTLQNLLL) match the Nuclear export signal motif.

It belongs to the papillomaviridae E7 protein family. Homodimer. Homooligomer. Interacts with host RB1; this interaction induces dissociation of RB1-E2F1 complex thereby disrupting RB1 activity. Interacts with host EP300; this interaction represses EP300 transcriptional activity. Interacts with protein E2; this interaction inhibits E7 oncogenic activity. Interacts with host TMEM173/STING; this interaction impairs the ability of TMEM173/STING to sense cytosolic DNA and promote the production of type I interferon (IFN-alpha and IFN-beta). In terms of processing, highly phosphorylated.

The protein localises to the host cytoplasm. Its subcellular location is the host nucleus. In terms of biological role, plays a role in viral genome replication by driving entry of quiescent cells into the cell cycle. Stimulation of progression from G1 to S phase allows the virus to efficiently use the cellular DNA replicating machinery to achieve viral genome replication. E7 protein has both transforming and trans-activating activities. Induces the disassembly of the E2F1 transcription factor from RB1, with subsequent transcriptional activation of E2F1-regulated S-phase genes. Interferes with host histone deacetylation mediated by HDAC1 and HDAC2, leading to transcription activation. Also plays a role in the inhibition of both antiviral and antiproliferative functions of host interferon alpha. Interaction with host TMEM173/STING impairs the ability of TMEM173/STING to sense cytosolic DNA and promote the production of type I interferon (IFN-alpha and IFN-beta). This is Protein E7 from European elk papillomavirus (EEPV).